A 298-amino-acid polypeptide reads, in one-letter code: Quinolinate synthase (298 aa).

Positions 19 and 36 each coordinate iminosuccinate. Position 81 (cysteine 81) interacts with [4Fe-4S] cluster. Residues 107 to 109 and serine 124 each bind iminosuccinate; that span reads YVN. Cysteine 168 is a binding site for [4Fe-4S] cluster. Iminosuccinate is bound by residues 193–195 and threonine 210; that span reads HPE. Cysteine 254 lines the [4Fe-4S] cluster pocket.

This sequence belongs to the quinolinate synthase family. Type 2 subfamily. [4Fe-4S] cluster is required as a cofactor.

It is found in the cytoplasm. It carries out the reaction iminosuccinate + dihydroxyacetone phosphate = quinolinate + phosphate + 2 H2O + H(+). The protein operates within cofactor biosynthesis; NAD(+) biosynthesis; quinolinate from iminoaspartate: step 1/1. In terms of biological role, catalyzes the condensation of iminoaspartate with dihydroxyacetone phosphate to form quinolinate. The protein is Quinolinate synthase of Thermotoga petrophila (strain ATCC BAA-488 / DSM 13995 / JCM 10881 / RKU-1).